Reading from the N-terminus, the 111-residue chain is DNA-directed RNA polymerase subunit Rpo11 (111 aa).

The protein belongs to the archaeal Rpo11/eukaryotic RPB11/RPC19 RNA polymerase subunit family. Part of the RNA polymerase complex.

The protein localises to the cytoplasm. It catalyses the reaction RNA(n) + a ribonucleoside 5'-triphosphate = RNA(n+1) + diphosphate. Its function is as follows. DNA-dependent RNA polymerase (RNAP) catalyzes the transcription of DNA into RNA using the four ribonucleoside triphosphates as substrates. This is DNA-directed RNA polymerase subunit Rpo11 from Thermoplasma acidophilum (strain ATCC 25905 / DSM 1728 / JCM 9062 / NBRC 15155 / AMRC-C165).